The primary structure comprises 232 residues: Phosphatidylserine decarboxylase proenzyme (232 aa).

S190 serves as the catalytic Schiff-base intermediate with substrate; via pyruvic acid. Position 190 is a pyruvic acid (Ser); by autocatalysis (S190).

Belongs to the phosphatidylserine decarboxylase family. PSD-A subfamily. In terms of assembly, heterodimer of a large membrane-associated beta subunit and a small pyruvoyl-containing alpha subunit. The cofactor is pyruvate. In terms of processing, is synthesized initially as an inactive proenzyme. Formation of the active enzyme involves a self-maturation process in which the active site pyruvoyl group is generated from an internal serine residue via an autocatalytic post-translational modification. Two non-identical subunits are generated from the proenzyme in this reaction, and the pyruvate is formed at the N-terminus of the alpha chain, which is derived from the carboxyl end of the proenzyme. The post-translation cleavage follows an unusual pathway, termed non-hydrolytic serinolysis, in which the side chain hydroxyl group of the serine supplies its oxygen atom to form the C-terminus of the beta chain, while the remainder of the serine residue undergoes an oxidative deamination to produce ammonia and the pyruvoyl prosthetic group on the alpha chain.

The protein resides in the cell membrane. It catalyses the reaction a 1,2-diacyl-sn-glycero-3-phospho-L-serine + H(+) = a 1,2-diacyl-sn-glycero-3-phosphoethanolamine + CO2. It participates in phospholipid metabolism; phosphatidylethanolamine biosynthesis; phosphatidylethanolamine from CDP-diacylglycerol: step 2/2. In terms of biological role, catalyzes the formation of phosphatidylethanolamine (PtdEtn) from phosphatidylserine (PtdSer). This Bradyrhizobium sp. (strain BTAi1 / ATCC BAA-1182) protein is Phosphatidylserine decarboxylase proenzyme.